We begin with the raw amino-acid sequence, 199 residues long: 7-methyl-GTP pyrophosphatase (199 aa).

Residue Asp76 is the Proton acceptor of the active site.

It belongs to the Maf family. YceF subfamily. Requires a divalent metal cation as cofactor.

The protein localises to the cytoplasm. The catalysed reaction is N(7)-methyl-GTP + H2O = N(7)-methyl-GMP + diphosphate + H(+). Its function is as follows. Nucleoside triphosphate pyrophosphatase that hydrolyzes 7-methyl-GTP (m(7)GTP). May have a dual role in cell division arrest and in preventing the incorporation of modified nucleotides into cellular nucleic acids. This chain is 7-methyl-GTP pyrophosphatase, found in Rhizobium johnstonii (strain DSM 114642 / LMG 32736 / 3841) (Rhizobium leguminosarum bv. viciae).